Here is a 569-residue protein sequence, read N- to C-terminus: Oxygen-dependent choline dehydrogenase (569 aa).

Position 9–38 (9–38) interacts with FAD; sequence DYVIIGGGSAGSVLGNRLSEDKDKEVLVLE. His475 (proton acceptor) is an active-site residue.

This sequence belongs to the GMC oxidoreductase family. Requires FAD as cofactor.

It carries out the reaction choline + A = betaine aldehyde + AH2. The catalysed reaction is betaine aldehyde + NAD(+) + H2O = glycine betaine + NADH + 2 H(+). It functions in the pathway amine and polyamine biosynthesis; betaine biosynthesis via choline pathway; betaine aldehyde from choline (cytochrome c reductase route): step 1/1. Involved in the biosynthesis of the osmoprotectant glycine betaine. Catalyzes the oxidation of choline to betaine aldehyde and betaine aldehyde to glycine betaine at the same rate. This Staphylococcus aureus (strain COL) protein is Oxygen-dependent choline dehydrogenase.